The primary structure comprises 138 residues: Small ribosomal subunit protein uS11c (138 aa).

Positions M1–H21 are disordered. Residues G9–H21 show a composition bias toward basic residues.

The protein belongs to the universal ribosomal protein uS11 family. Part of the 30S ribosomal subunit.

It localises to the plastid. The protein resides in the chloroplast. The protein is Small ribosomal subunit protein uS11c of Pisum sativum (Garden pea).